The following is a 757-amino-acid chain: LPS-assembly protein LptD (757 aa).

An N-terminal signal peptide occupies residues 1–21; it reads MRRLIPIAITGSLLWGAAVQA.

The protein belongs to the LptD family. Component of the lipopolysaccharide transport and assembly complex. Interacts with LptE and LptA.

Its subcellular location is the cell outer membrane. In terms of biological role, together with LptE, is involved in the assembly of lipopolysaccharide (LPS) at the surface of the outer membrane. In Alkalilimnicola ehrlichii (strain ATCC BAA-1101 / DSM 17681 / MLHE-1), this protein is LPS-assembly protein LptD.